The following is a 757-amino-acid chain: 5-methyltetrahydropteroyltriglutamate--homocysteine methyltransferase (757 aa).

Residues 15–18 (RELK) and Lys114 each bind 5-methyltetrahydropteroyltri-L-glutamate. L-homocysteine contacts are provided by residues 428–430 (IGS) and Glu481. Residues 428–430 (IGS) and Glu481 each bind L-methionine. 5-methyltetrahydropteroyltri-L-glutamate-binding positions include 512 to 513 (RC) and Trp558. Asp596 provides a ligand contact to L-homocysteine. Asp596 is a binding site for L-methionine. 5-methyltetrahydropteroyltri-L-glutamate is bound at residue Glu602. Zn(2+)-binding residues include His639, Cys641, and Glu663. His692 (proton donor) is an active-site residue. Cys724 is a Zn(2+) binding site.

This sequence belongs to the vitamin-B12 independent methionine synthase family. The cofactor is Zn(2+).

The catalysed reaction is 5-methyltetrahydropteroyltri-L-glutamate + L-homocysteine = tetrahydropteroyltri-L-glutamate + L-methionine. Its pathway is amino-acid biosynthesis; L-methionine biosynthesis via de novo pathway; L-methionine from L-homocysteine (MetE route): step 1/1. Functionally, catalyzes the transfer of a methyl group from 5-methyltetrahydrofolate to homocysteine resulting in methionine formation. The chain is 5-methyltetrahydropteroyltriglutamate--homocysteine methyltransferase from Lactococcus lactis subsp. cremoris (strain MG1363).